A 275-amino-acid polypeptide reads, in one-letter code: Large ribosomal subunit protein uL2 (275 aa).

The tract at residues valine 220–arginine 275 is disordered. Residues proline 227–alanine 239 are compositionally biased toward basic and acidic residues. Residues lysine 249–asparagine 262 show a composition bias toward basic residues.

It belongs to the universal ribosomal protein uL2 family. In terms of assembly, part of the 50S ribosomal subunit. Forms a bridge to the 30S subunit in the 70S ribosome.

In terms of biological role, one of the primary rRNA binding proteins. Required for association of the 30S and 50S subunits to form the 70S ribosome, for tRNA binding and peptide bond formation. It has been suggested to have peptidyltransferase activity; this is somewhat controversial. Makes several contacts with the 16S rRNA in the 70S ribosome. This is Large ribosomal subunit protein uL2 from Roseiflexus sp. (strain RS-1).